Reading from the N-terminus, the 358-residue chain is Protein RecA (358 aa).

76–83 (GPESSGKT) lines the ATP pocket.

Belongs to the RecA family.

The protein resides in the cytoplasm. Its function is as follows. Can catalyze the hydrolysis of ATP in the presence of single-stranded DNA, the ATP-dependent uptake of single-stranded DNA by duplex DNA, and the ATP-dependent hybridization of homologous single-stranded DNAs. It interacts with LexA causing its activation and leading to its autocatalytic cleavage. The sequence is that of Protein RecA from Rhodospirillum centenum (strain ATCC 51521 / SW).